A 649-amino-acid chain; its full sequence is Acetyl-coenzyme A synthetase (649 aa).

Residues Arg190–Arg193 and Thr310 each bind CoA. Residues Gly386–Pro388, Asp410–Thr415, Asp499, and Arg514 each bind ATP. Position 522 (Ser522) interacts with CoA. ATP is bound at residue Arg525. 3 residues coordinate Mg(2+): Val536, His538, and Val541. Residue Arg583 coordinates CoA. Lys608 is subject to N6-acetyllysine.

This sequence belongs to the ATP-dependent AMP-binding enzyme family. It depends on Mg(2+) as a cofactor. Post-translationally, acetylated. Deacetylation by the SIR2-homolog deacetylase activates the enzyme.

It catalyses the reaction acetate + ATP + CoA = acetyl-CoA + AMP + diphosphate. Functionally, catalyzes the conversion of acetate into acetyl-CoA (AcCoA), an essential intermediate at the junction of anabolic and catabolic pathways. AcsA undergoes a two-step reaction. In the first half reaction, AcsA combines acetate with ATP to form acetyl-adenylate (AcAMP) intermediate. In the second half reaction, it can then transfer the acetyl group from AcAMP to the sulfhydryl group of CoA, forming the product AcCoA. This chain is Acetyl-coenzyme A synthetase, found in Methylorubrum extorquens (strain PA1) (Methylobacterium extorquens).